Consider the following 883-residue polypeptide: Kinesin-like protein 5 (883 aa).

Residues 6 to 390 (SITVTVRVRP…LKYANRAKNI (385 aa)) enclose the Kinesin motor domain. ATP is bound at residue 144–151 (GATGCGKT). Coiled coils occupy residues 396–435 (RNMI…SSQS) and 563–588 (LQDE…VDEF). Positions 755-785 (VSPMLEDKPEPGLLIKSPLEKKQEVNSESTQ) are disordered.

Belongs to the TRAFAC class myosin-kinesin ATPase superfamily. Kinesin family. Kinesin II subfamily. Heterodimer with klp6.

It is found in the cytoplasm. The protein resides in the cytoskeleton. The protein localises to the chromosome. It localises to the centromere. Its subcellular location is the kinetochore. It is found in the spindle. In terms of biological role, has a role in establishing metaphase during mitosis. Required for chromosome segregation where it generates tension during kinetochore capturing. This is Kinesin-like protein 5 (klp5) from Schizosaccharomyces pombe (strain 972 / ATCC 24843) (Fission yeast).